The chain runs to 552 residues: Probable inorganic phosphate transporter 1-10 (552 aa).

Residues 1 to 22 (MAPIGVLTALDQARTQYYHFKA) lie on the Cytoplasmic side of the membrane. The helical transmembrane segment at 23-43 (IVIAGMGLFTDSYDLFCIAPV) threads the bilayer. Residues 44-68 (MKIVGRVYYSDGGARPGVTPPAVVS) are Extracellular-facing. The helical transmembrane segment at 69–89 (ATVGVALLGAVIGNVVFGALG) threads the bilayer. Residues 90–96 (DRVGRRR) are Cytoplasmic-facing. The helical transmembrane segment at 97 to 117 (VYGACLLLMVCSSVGSGFSVC) threads the bilayer. Topologically, residues 118-123 (RTRRCA) are extracellular. A helical membrane pass occupies residues 124-144 (LASLCFFRFLLGVGVGGDYPL). Topologically, residues 145–158 (SATIMSEFANRRTR) are cytoplasmic. The chain crosses the membrane as a helical span at residues 159–179 (GAFIAAVFSMQGFGILASSAV). Residues 180–203 (TMAVAAAFDHYTGYPAPLDTPECA) lie on the Extracellular side of the membrane. Residues 204–224 (DLAWRIILMAGAVPAALTYYW) traverse the membrane as a helical segment. Topologically, residues 225 to 295 (RMSMPETARY…RRFVRQHGRD (71 aa)) are cytoplasmic. A helical transmembrane segment spans residues 296 to 316 (LFACAAAWFLLDIPYYSSTLF). The Extracellular segment spans residues 317–342 (QSQIYRPLFPAPGLINAFQEAFNVAK). The chain crosses the membrane as a helical span at residues 343-363 (FQAVIAVASTIPGYFVAVLLI). At 364 to 369 (DRVGRR) the chain is on the cytoplasmic side. Residues 370–390 (CLQMAGFLLMAVFLFALAGPY) form a helical membrane-spanning segment. The Extracellular portion of the chain corresponds to 391–397 (DGYWRDH). The helical transmembrane segment at 398-418 (GAHAGYIVLYSLTFFSANLGP) threads the bilayer. Residues 419–439 (NTTTFILPAELFPARFRSTCH) lie on the Cytoplasmic side of the membrane. The chain crosses the membrane as a helical span at residues 440 to 460 (GLSGAAGKLGALVGSIGFLWA). Residues 461 to 473 (SQQKDGAAAGHLP) are Extracellular-facing. Residues 474-494 (GIGMMYALFVLGGICLLGLAL) traverse the membrane as a helical segment. Residues 495-552 (TYVFTPETMMRSLEENESDRAQTQVGDGGSDTEAAKSPASMASSHLSMSPILPARVSV) lie on the Cytoplasmic side of the membrane. The segment at 507–540 (LEENESDRAQTQVGDGGSDTEAAKSPASMASSHL) is disordered.

It belongs to the major facilitator superfamily. Phosphate:H(+) symporter (TC 2.A.1.9) family. Expressed at low levels in roots.

The protein resides in the membrane. In terms of biological role, high-affinity transporter for external inorganic phosphate. The chain is Probable inorganic phosphate transporter 1-10 (PHT1-10) from Oryza sativa subsp. japonica (Rice).